The chain runs to 1535 residues: ABC multidrug transporter atrF (1535 aa).

The interval 1–115 (MADDHRQPEA…DEQASSTDEY (115 aa)) is disordered. Asn-33 carries N-linked (GlcNAc...) asparagine glycosylation. The segment covering 34 to 45 (TTSTSETDASAD) has biased composition (low complexity). The span at 46-76 (ADARWGERNQGDPVSRRGAMEEFEEMRREVT) shows a compositional bias: basic and acidic residues. Over residues 79-93 (SLHRTRSAKDARRRS) the composition is skewed to basic residues. 4 N-linked (GlcNAc...) asparagine glycosylation sites follow: Asn-149, Asn-274, Asn-287, and Asn-351. An ABC transporter 1 domain is found at 185–427 (VPALHFGKRP…FVDLGFYCPE (243 aa)). The next 7 helical transmembrane spans lie at 540–560 (LYTK…LFYG), 573–593 (GALF…MPAV), 618–638 (VVVD…IVYF), 646–666 (ASKF…ITSL), 680–700 (AVRF…YVIP), 703–723 (GLID…LSYS), and 791–811 (FGVV…AAEV). The interval 834-868 (KAQNGKGNDEEQVQNTGDNAALSRGEAKSSSSGEA) is disordered. The ABC transporter 2 domain occupies 879–1117 (FTWSNVEYTV…DVIKYFADRG (239 aa)). The N-linked (GlcNAc...) asparagine glycan is linked to Asn-892. 915-922 (GASGAGKT) contributes to the ATP binding site. The next 6 membrane-spanning stretches (helical) occupy residues 1212 to 1232 (YGKL…FWML), 1246 to 1266 (IFLI…KFYI), 1295 to 1315 (IPMA…PVGF), 1320 to 1340 (SSAG…ASWG), 1342 to 1362 (WICA…FFFV), and 1384 to 1406 (WMYY…FPSV). Asn-1459 carries an N-linked (GlcNAc...) asparagine glycan. Helical transmembrane passes span 1477 to 1497 (CFGI…FFIY) and 1503 to 1523 (GWSF…EGVK).

This sequence belongs to the ABC transporter superfamily. ABCG family. PDR (TC 3.A.1.205) subfamily.

The protein resides in the cell membrane. It carries out the reaction voriconazole(in) + ATP + H2O = voriconazole(out) + ADP + phosphate + H(+). In terms of biological role, pleiotropic ABC efflux transporter involved in the basal level of azole susceptibility. Confers resistance to voriconazole. In Aspergillus flavus (strain ATCC 200026 / FGSC A1120 / IAM 13836 / NRRL 3357 / JCM 12722 / SRRC 167), this protein is ABC multidrug transporter atrF.